The sequence spans 103 residues: ATP-dependent Clp protease adapter protein ClpS 2 (103 aa).

This sequence belongs to the ClpS family. As to quaternary structure, binds to the N-terminal domain of the chaperone ClpA.

In terms of biological role, involved in the modulation of the specificity of the ClpAP-mediated ATP-dependent protein degradation. This is ATP-dependent Clp protease adapter protein ClpS 2 from Agrobacterium fabrum (strain C58 / ATCC 33970) (Agrobacterium tumefaciens (strain C58)).